The following is a 211-amino-acid chain: Large ribosomal subunit protein uL3 (211 aa).

The disordered stretch occupies residues 116-142 (GTSGVMKKHGFSGNRASHGVSRNHRLG).

Belongs to the universal ribosomal protein uL3 family. As to quaternary structure, part of the 50S ribosomal subunit. Forms a cluster with proteins L14 and L19.

Its function is as follows. One of the primary rRNA binding proteins, it binds directly near the 3'-end of the 23S rRNA, where it nucleates assembly of the 50S subunit. The protein is Large ribosomal subunit protein uL3 of Fusobacterium nucleatum subsp. nucleatum (strain ATCC 25586 / DSM 15643 / BCRC 10681 / CIP 101130 / JCM 8532 / KCTC 2640 / LMG 13131 / VPI 4355).